Here is a 288-residue protein sequence, read N- to C-terminus: Shikimate dehydrogenase (NADP(+)) (288 aa).

Residues 22–24 (SLS) and Thr-69 each bind shikimate. The active-site Proton acceptor is Lys-73. Shikimate-binding residues include Asn-94 and Asp-110. Residues 131–135 (GSGGA) and Leu-228 contribute to the NADP(+) site. Tyr-230 provides a ligand contact to shikimate. Gly-251 provides a ligand contact to NADP(+).

The protein belongs to the shikimate dehydrogenase family. As to quaternary structure, homodimer.

It catalyses the reaction shikimate + NADP(+) = 3-dehydroshikimate + NADPH + H(+). It functions in the pathway metabolic intermediate biosynthesis; chorismate biosynthesis; chorismate from D-erythrose 4-phosphate and phosphoenolpyruvate: step 4/7. Its function is as follows. Involved in the biosynthesis of the chorismate, which leads to the biosynthesis of aromatic amino acids. Catalyzes the reversible NADPH linked reduction of 3-dehydroshikimate (DHSA) to yield shikimate (SA). The sequence is that of Shikimate dehydrogenase (NADP(+)) from Synechococcus sp. (strain JA-2-3B'a(2-13)) (Cyanobacteria bacterium Yellowstone B-Prime).